Consider the following 502-residue polypeptide: Putative diacyglycerol O-acyltransferase Rv1760 (502 aa).

The Proton acceptor role is filled by histidine 174.

Belongs to the long-chain O-acyltransferase family.

It carries out the reaction an acyl-CoA + a 1,2-diacyl-sn-glycerol = a triacyl-sn-glycerol + CoA. It catalyses the reaction di-(9Z)-octadecenoylglycerol + (9Z)-octadecenoyl-CoA = 1,2,3-tri-(9Z-octadecenoyl)-glycerol + CoA. Its pathway is glycerolipid metabolism; triacylglycerol biosynthesis. In terms of biological role, catalyzes the terminal and only committed step in triacylglycerol synthesis by using diacylglycerol and fatty acyl CoA as substrates. Required for storage lipid synthesis. Upon expression in E.coli functions weakly as a triacylglycerol synthase, making triacylglycerol (TG) from diolein and long-chain fatty acyl-CoA. Has very weak wax synthase activity, incorporating palmityl alcohol into wax esters in the presence of palmitoyl-CoA. This Mycobacterium tuberculosis (strain ATCC 25618 / H37Rv) protein is Putative diacyglycerol O-acyltransferase Rv1760.